The primary structure comprises 120 residues: Large ribosomal subunit protein uL18 (120 aa).

This sequence belongs to the universal ribosomal protein uL18 family. In terms of assembly, part of the 50S ribosomal subunit; part of the 5S rRNA/L5/L18 subcomplex. In B.stearothermophilus only 2 proteins, L5 and L18 have been shown to be part of this subcomplex, unlike the case in E.coli and T.thermophilus where L25 (TL5) is also found. Post-translationally, the protein, when overexpressed in E.coli, contains a phosphoserine, which is required for the protein to bind to 5S rRNA. It has been suggested, based solely on amino acid conservation, that this occurs on Ser-57.

In terms of biological role, this is one of the proteins that bind and probably mediate the attachment of the 5S RNA into the large ribosomal subunit, where it forms part of the central protuberance. This is Large ribosomal subunit protein uL18 (rplR) from Geobacillus stearothermophilus (Bacillus stearothermophilus).